Reading from the N-terminus, the 324-residue chain is Phospho-N-acetylmuramoyl-pentapeptide-transferase (324 aa).

10 helical membrane-spanning segments follow: residues 9–29 (TFAV…PFLV), 53–73 (TMGA…FSFI), 77–97 (VSAA…LGFL), 117–137 (FLGQ…NDFA), 147–167 (IEVD…VGFS), 176–196 (LDGL…VIAF), 201–221 (MDVA…LLFN), 227–247 (IFMG…ISIL), 253–273 (LLLL…LQVF), and 304–324 (VLTF…VVIF).

This sequence belongs to the glycosyltransferase 4 family. MraY subfamily. Requires Mg(2+) as cofactor.

It localises to the cell membrane. It catalyses the reaction UDP-N-acetyl-alpha-D-muramoyl-L-alanyl-gamma-D-glutamyl-meso-2,6-diaminopimeloyl-D-alanyl-D-alanine + di-trans,octa-cis-undecaprenyl phosphate = di-trans,octa-cis-undecaprenyl diphospho-N-acetyl-alpha-D-muramoyl-L-alanyl-D-glutamyl-meso-2,6-diaminopimeloyl-D-alanyl-D-alanine + UMP. Its pathway is cell wall biogenesis; peptidoglycan biosynthesis. In terms of biological role, catalyzes the initial step of the lipid cycle reactions in the biosynthesis of the cell wall peptidoglycan: transfers peptidoglycan precursor phospho-MurNAc-pentapeptide from UDP-MurNAc-pentapeptide onto the lipid carrier undecaprenyl phosphate, yielding undecaprenyl-pyrophosphoryl-MurNAc-pentapeptide, known as lipid I. The polypeptide is Phospho-N-acetylmuramoyl-pentapeptide-transferase (Listeria monocytogenes serovar 1/2a (strain ATCC BAA-679 / EGD-e)).